Reading from the N-terminus, the 149-residue chain is Large ribosomal subunit protein uL11 (149 aa).

It belongs to the universal ribosomal protein uL11 family. In terms of assembly, part of the ribosomal stalk of the 50S ribosomal subunit. Interacts with L10 and the large rRNA to form the base of the stalk. L10 forms an elongated spine to which L12 dimers bind in a sequential fashion forming a multimeric L10(L12)X complex. One or more lysine residues are methylated.

Forms part of the ribosomal stalk which helps the ribosome interact with GTP-bound translation factors. The protein is Large ribosomal subunit protein uL11 of Methylobacterium nodulans (strain LMG 21967 / CNCM I-2342 / ORS 2060).